A 314-amino-acid polypeptide reads, in one-letter code: Phosphoribosylaminoimidazole-succinocarboxamide synthase (314 aa).

Belongs to the SAICAR synthetase family.

The catalysed reaction is 5-amino-1-(5-phospho-D-ribosyl)imidazole-4-carboxylate + L-aspartate + ATP = (2S)-2-[5-amino-1-(5-phospho-beta-D-ribosyl)imidazole-4-carboxamido]succinate + ADP + phosphate + 2 H(+). It functions in the pathway purine metabolism; IMP biosynthesis via de novo pathway; 5-amino-1-(5-phospho-D-ribosyl)imidazole-4-carboxamide from 5-amino-1-(5-phospho-D-ribosyl)imidazole-4-carboxylate: step 1/2. The chain is Phosphoribosylaminoimidazole-succinocarboxamide synthase from Bacteroides thetaiotaomicron (strain ATCC 29148 / DSM 2079 / JCM 5827 / CCUG 10774 / NCTC 10582 / VPI-5482 / E50).